Consider the following 453-residue polypeptide: Probable glycine dehydrogenase (decarboxylating) subunit 1 (453 aa).

This sequence belongs to the GcvP family. N-terminal subunit subfamily. As to quaternary structure, the glycine cleavage system is composed of four proteins: P, T, L and H. In this organism, the P 'protein' is a heterodimer of two subunits.

The catalysed reaction is N(6)-[(R)-lipoyl]-L-lysyl-[glycine-cleavage complex H protein] + glycine + H(+) = N(6)-[(R)-S(8)-aminomethyldihydrolipoyl]-L-lysyl-[glycine-cleavage complex H protein] + CO2. Functionally, the glycine cleavage system catalyzes the degradation of glycine. The P protein binds the alpha-amino group of glycine through its pyridoxal phosphate cofactor; CO(2) is released and the remaining methylamine moiety is then transferred to the lipoamide cofactor of the H protein. The polypeptide is Probable glycine dehydrogenase (decarboxylating) subunit 1 (Caulobacter sp. (strain K31)).